The sequence spans 388 residues: Oligogalacturonide lyase (388 aa).

It localises to the periplasm. The catalysed reaction is 4-(4-deoxy-alpha-D-galact-4-enuronosyl)-D-galacturonate = 2 5-dehydro-4-deoxy-D-glucuronate. Its pathway is glycan metabolism; pectin degradation; 2-dehydro-3-deoxy-D-gluconate from pectin: step 3/5. Involved in degradation of pectin, which causes soft-rod disease in plants. This Pectobacterium atrosepticum (strain SCRI 1043 / ATCC BAA-672) (Erwinia carotovora subsp. atroseptica) protein is Oligogalacturonide lyase (ogl).